A 400-amino-acid chain; its full sequence is Protection of telomeres homolog 1 (400 aa).

This sequence belongs to the telombin family. As to expression, expressed in sperm and oocytes.

The protein resides in the nucleus. The protein localises to the nucleus envelope. It localises to the chromosome. Its subcellular location is the telomere. In terms of biological role, telomeric DNA-binding protein, which binds to single-stranded C-rich repeat sequences, with high specificity to the 5'-GCCTAA-3' sequence. Repeat sequence binding can be at the 5' or 3' telomeric end. May have a role in protecting the 5' end of the C-rich strand of the telomere. Acts redundantly with pot-2 to negatively regulate telomerase-mediated telomere extension. Also regulates telomere length by the telomerase-independent telomere maintenance pathway called ALT (alternative lengthening of telomeres). Through sun-1, anchors telomeres to the nuclear envelope in embryos. This chain is Protection of telomeres homolog 1, found in Caenorhabditis elegans.